The following is a 394-amino-acid chain: MLDPFSEKAKELLKGFGSINDFMDAIPKIVSVDDVIERIRVVKNEKLIDKFLDQDNVMDLAQFYALLGALSYSPYGIELELVKKANLIIYSERLKRKKEIKPEEISIDVSTAIEFPTEDVRKIERVYGKIPEYTMKISDFLDLVPDEKLANYYIYEGRVYLKREDLIRIWSKAFERNVERGVNMLYEIRDELPEFYRKVLGEIQAFAEEEFGRKFGEIQGGKLRPEFFPPCIKNALKGVPQGIRNYAITVLLTSFLSYARICPNPPRRNVRVKDCIKDIRVITEEILPIIIEAANRCSPPLFEDQPNEIKNIWYHLGFGYTANPSLEDSGNSTWYFPPNCEKIRANAPQLCTPDKHCKYIRNPLTYYLRRLYLEGRRNAPKRGNKRGKKELLHQ.

Positions 231, 340, 351, and 357 each coordinate [4Fe-4S] cluster.

The protein belongs to the eukaryotic-type primase large subunit family. As to quaternary structure, heterodimer of a small subunit (PriS) and a large subunit (PriL). The cofactor is [4Fe-4S] cluster.

Regulatory subunit of DNA primase, an RNA polymerase that catalyzes the synthesis of short RNA molecules used as primers for DNA polymerase during DNA replication. Stabilizes and modulates the activity of the small subunit, increasing the rate of DNA synthesis, and conferring RNA synthesis capability. The DNA polymerase activity may enable DNA primase to also catalyze primer extension after primer synthesis. May also play a role in DNA repair. This chain is DNA primase large subunit PriL, found in Pyrococcus horikoshii (strain ATCC 700860 / DSM 12428 / JCM 9974 / NBRC 100139 / OT-3).